A 299-amino-acid polypeptide reads, in one-letter code: Apolipoprotein E (299 aa).

Residues 1-18 (MKVLCTVLVVTLLAGCQA) form the signal peptide. The tract at residues 74–245 (VLMEDTMKAV…RLEEVREQME (172 aa)) is 8 X 22 AA approximate tandem repeats. 8 tandem repeats follow at residues 75 to 95 (LMEDTMKAVKAYKSELEQELV), 96 to 117 (PMAEDTKARLSKELQAAQARLG), 118 to 139 (ADMEEVRNRLAQYRSEMQAMLG), 140 to 161 (QSAEELRARLASHLRKLRKKLL), 162 to 183 (RDAEDLQKRLAVYKDGASEGAE), 184 to 206 (RSVSAVRERLESLVEQSRARAAL), 207 to 225 (TSQPLQERAQAWGKRLRGR), and 224 to 242 (GRLEEVGSQARDRLEEVRE). Position 137 is a methionine sulfoxide (M137). S141 carries the post-translational modification Phosphoserine. The interval 152 to 162 (HLRKLRKKLLR) is LDL and other lipoprotein receptors binding. Residue 156–159 (LRKK) coordinates heparin. The tract at residues 205-273 (ALTSQPLQER…GWFEPMVEDM (69 aa)) is lipid-binding and lipoprotein association. Residue 219 to 226 (GKRLRGRL) coordinates heparin. The interval 261–273 (RLKGWFEPMVEDM) is specificity for association with VLDL.

Belongs to the apolipoprotein A1/A4/E family. In terms of assembly, homotetramer. May interact with ABCA1; functionally associated with ABCA1 in the biogenesis of HDLs. May interact with APP/A4 amyloid-beta peptide; the interaction is extremely stable in vitro but its physiological significance is unclear. May interact with MAPT. May interact with MAP2. In the cerebrospinal fluid, interacts with secreted SORL1. Interacts with PMEL; this allows the loading of PMEL luminal fragment on ILVs to induce fibril nucleation. APOE exists as multiple glycosylated and sialylated glycoforms within cells and in plasma. The extent of glycosylation and sialylation are tissue and context specific. Post-translationally, glycated in plasma VLDL. In terms of processing, phosphorylated by FAM20C in the extracellular medium.

Its subcellular location is the secreted. It localises to the extracellular space. It is found in the extracellular matrix. The protein resides in the extracellular vesicle. The protein localises to the endosome. Its subcellular location is the multivesicular body. Its function is as follows. APOE is an apolipoprotein, a protein associating with lipid particles, that mainly functions in lipoprotein-mediated lipid transport between organs via the plasma and interstitial fluids. APOE is a core component of plasma lipoproteins and is involved in their production, conversion and clearance. Apolipoproteins are amphipathic molecules that interact both with lipids of the lipoprotein particle core and the aqueous environment of the plasma. As such, APOE associates with chylomicrons, chylomicron remnants, very low density lipoproteins (VLDL) and intermediate density lipoproteins (IDL) but shows a preferential binding to high-density lipoproteins (HDL). It also binds a wide range of cellular receptors including the LDL receptor/LDLR, the LDL receptor-related proteins LRP1, LRP2 and LRP8 and the very low-density lipoprotein receptor/VLDLR that mediate the cellular uptake of the APOE-containing lipoprotein particles. Finally, APOE also has a heparin-binding activity and binds heparan-sulfate proteoglycans on the surface of cells, a property that supports the capture and the receptor-mediated uptake of APOE-containing lipoproteins by cells. A main function of APOE is to mediate lipoprotein clearance through the uptake of chylomicrons, VLDLs, and HDLs by hepatocytes. APOE is also involved in the biosynthesis by the liver of VLDLs as well as their uptake by peripheral tissues ensuring the delivery of triglycerides and energy storage in muscle, heart and adipose tissues. By participating in the lipoprotein-mediated distribution of lipids among tissues, APOE plays a critical role in plasma and tissues lipid homeostasis. APOE is also involved in two steps of reverse cholesterol transport, the HDLs-mediated transport of cholesterol from peripheral tissues to the liver, and thereby plays an important role in cholesterol homeostasis. First, it is functionally associated with ABCA1 in the biogenesis of HDLs in tissues. Second, it is enriched in circulating HDLs and mediates their uptake by hepatocytes. APOE also plays an important role in lipid transport in the central nervous system, regulating neuron survival and sprouting. This Ctenomys sociabilis (Social tuco-tuco) protein is Apolipoprotein E (APOE).